The primary structure comprises 1295 residues: DNA-directed RNA polymerase subunit beta' (1295 aa).

Zn(2+) contacts are provided by C60, C62, C75, and C78. Positions 516, 518, and 520 each coordinate Mg(2+). Zn(2+)-binding residues include C841, C914, C921, and C924.

This sequence belongs to the RNA polymerase beta' chain family. As to quaternary structure, the RNAP catalytic core consists of 2 alpha, 1 beta, 1 beta' and 1 omega subunit. When a sigma factor is associated with the core the holoenzyme is formed, which can initiate transcription. The cofactor is Mg(2+). Zn(2+) is required as a cofactor.

It catalyses the reaction RNA(n) + a ribonucleoside 5'-triphosphate = RNA(n+1) + diphosphate. In terms of biological role, DNA-dependent RNA polymerase catalyzes the transcription of DNA into RNA using the four ribonucleoside triphosphates as substrates. This Dehalococcoides mccartyi (strain ATCC BAA-2266 / KCTC 15142 / 195) (Dehalococcoides ethenogenes (strain 195)) protein is DNA-directed RNA polymerase subunit beta'.